Here is a 648-residue protein sequence, read N- to C-terminus: DNA ligase (648 aa).

Residues 30-34 (DEEYD), 79-80 (SM), and Glu-108 each bind NAD(+). Lys-110 functions as the N6-AMP-lysine intermediate in the catalytic mechanism. The NAD(+) site is built by Arg-131, Glu-165, Lys-280, and Lys-304. The Zn(2+) site is built by Cys-398, Cys-401, Cys-414, and Cys-419. The BRCT domain maps to 573–648 (AKENPFKGKI…LTEDEMRAML (76 aa)).

Belongs to the NAD-dependent DNA ligase family. LigA subfamily. Mg(2+) is required as a cofactor. Requires Mn(2+) as cofactor.

The catalysed reaction is NAD(+) + (deoxyribonucleotide)n-3'-hydroxyl + 5'-phospho-(deoxyribonucleotide)m = (deoxyribonucleotide)n+m + AMP + beta-nicotinamide D-nucleotide.. Its function is as follows. DNA ligase that catalyzes the formation of phosphodiester linkages between 5'-phosphoryl and 3'-hydroxyl groups in double-stranded DNA using NAD as a coenzyme and as the energy source for the reaction. It is essential for DNA replication and repair of damaged DNA. The protein is DNA ligase of Sulfurovum sp. (strain NBC37-1).